The chain runs to 291 residues: S-adenosylmethionine uptake transporter (291 aa).

The next 10 helical transmembrane spans lie at 4-24 (ALKTYSIGIGWFLLSLVSSSA), 41-61 (VAFFRFFFSSIVLLPFVVYYG), 74-91 (ILRGLLLFFGMTSWTYGL), 98-118 (TATVISFSIPLFTLILAVFFL), 121-141 (NIIWQRWVVTIVGFVGLVITL), 148-168 (FNPEMLYFVLAAISFAMLDII), 178-198 (MISMLFYSAIVTAVVSIPAAA), 206-226 (LFELALLFILGSSGSLILFLL), 237-257 (ATAPYRYLELVISAIAAYFIF), and 260-280 (FPDKSTLHGAVIIIPATLFII). 2 consecutive EamA domains span residues 21 to 141 (SSSA…VITL) and 160 to 280 (ISFA…LFII).

Belongs to the drug/metabolite transporter (DMT) superfamily. 10 TMS drug/metabolite exporter (DME) (TC 2.A.7.3) family.

The protein resides in the cell inner membrane. In terms of biological role, transports S-adenosylmethionine. This Rickettsia bellii (strain RML369-C) protein is S-adenosylmethionine uptake transporter (sam).